A 158-amino-acid polypeptide reads, in one-letter code: Leptin-B (158 aa).

Positions Met-1–Thr-19 are cleaved as a signal peptide. Cys-114 and Cys-158 form a disulfide bridge.

This sequence belongs to the leptin family. In terms of tissue distribution, highly expressed in the brain and eye. Expressed at low levels in muscle and skin.

It localises to the secreted. In terms of biological role, may function as part of a signaling pathway that acts to regulate the size of the body fat depot. The protein is Leptin-B of Oryzias latipes (Japanese rice fish).